The following is a 55-amino-acid chain: Preprotein translocase subunit SecG (55 aa).

The Cytoplasmic segment spans residues Met-1–Asp-31. Residues Pro-32–Ile-51 traverse the membrane as a helical segment. Topologically, residues Phe-52 to Val-55 are extracellular.

This sequence belongs to the SEC61-beta family. Component of the protein translocase complex. Heterotrimer consisting of alpha (SecY), beta (SecG) and gamma (SecE) subunits. Can form oligomers of the heterotrimer.

The protein resides in the cell membrane. Its function is as follows. Involved in protein export. The function of the beta subunit is unknown, but it may be involved in stabilization of the trimeric complex. The chain is Preprotein translocase subunit SecG from Picrophilus torridus (strain ATCC 700027 / DSM 9790 / JCM 10055 / NBRC 100828 / KAW 2/3).